The following is a 153-amino-acid chain: Cytochrome c oxidase subunit 5A, mitochondrial (153 aa).

The transit peptide at 1–20 (MLRNTFTRAGGLSRITSVRF) directs the protein to the mitochondrion. At 21–88 (AQTHALSNAA…EWGPRRPVLN (68 aa)) the chain is on the mitochondrial matrix side. A helical membrane pass occupies residues 89 to 111 (KGDSSFIAKGVAAGLLFSVGLFA). Residues 112 to 153 (VVRMAGGQDAKTMNKEWQLKSDEYLKSKNANPWGGYSQVQSK) lie on the Mitochondrial intermembrane side of the membrane.

The protein belongs to the cytochrome c oxidase IV family. Component of the cytochrome c oxidase (complex IV, CIV), a multisubunit enzyme composed of 12 subunits. The complex is composed of a catalytic core of 3 subunits COX1, COX2 and COX3, encoded in the mitochondrial DNA, and 9 supernumerary subunits COX4, COX5A (or COX5B), COX6, COX7, COX8, COX9, COX12, COX13 and COX26, which are encoded in the nuclear genome. COX5A is the predominant subunit V during aerobic/normoxic growth, it gets replaced by COX5B under anaerobic/hypoxic conditions. The complex exists as a monomer or a dimer and forms supercomplexes (SCs) in the inner mitochondrial membrane with a dimer of ubiquinol-cytochrome c oxidoreductase (cytochrome b-c1 complex, complex III, CIII), resulting in 2 different assemblies (supercomplexes III(2)IV and III(2)IV(2)). COX5A interacts with COR1, CYT1 and QCR6 at the CIII-CIV interface.

It is found in the mitochondrion inner membrane. Its pathway is energy metabolism; oxidative phosphorylation. In terms of biological role, component of the cytochrome c oxidase, the last enzyme in the mitochondrial electron transport chain which drives oxidative phosphorylation. The respiratory chain contains 3 multisubunit complexes succinate dehydrogenase (complex II, CII), ubiquinol-cytochrome c oxidoreductase (cytochrome b-c1 complex, complex III, CIII) and cytochrome c oxidase (complex IV, CIV), that cooperate to transfer electrons derived from NADH and succinate to molecular oxygen, creating an electrochemical gradient over the inner membrane that drives transmembrane transport and the ATP synthase. Cytochrome c oxidase is the component of the respiratory chain that catalyzes the reduction of oxygen to water. Electrons originating from reduced cytochrome c in the intermembrane space (IMS) are transferred via the dinuclear copper A center (CU(A)) of COX2 and heme A of COX1 to the active site in COX1, a binuclear center (BNC) formed by heme A3 and copper B (CU(B)). The BNC reduces molecular oxygen to 2 water molecules using 4 electrons from cytochrome c in the IMS and 4 protons from the mitochondrial matrix. The protein is Cytochrome c oxidase subunit 5A, mitochondrial (COX5A) of Saccharomyces cerevisiae (strain ATCC 204508 / S288c) (Baker's yeast).